Here is a 61-residue protein sequence, read N- to C-terminus: uncharacterized protein (61 aa).

A run of 2 helical transmembrane segments spans residues 7–24 and 29–48; these read FNVFCIVALGSIYGYKLF and VSTTRLIIASVIVLWNIVGL.

It is found in the cell membrane. This is an uncharacterized protein from Bacillus subtilis (strain 168).